The chain runs to 454 residues: tRNA modification GTPase MnmE (454 aa).

The (6S)-5-formyl-5,6,7,8-tetrahydrofolate site is built by R23, E80, and K120. Residues 216–377 (GMKVVIAGRP…LRNHLKQSMG (162 aa)) form the TrmE-type G domain. A K(+)-binding site is contributed by N226. GTP-binding positions include 226–231 (NAGKSS), 245–251 (TDIAGTT), 270–273 (DTAG), 335–338 (NKAD), and 358–360 (SAR). S230 contributes to the Mg(2+) binding site. T245, I247, and T250 together coordinate K(+). Mg(2+) is bound at residue T251. Position 454 (K454) interacts with (6S)-5-formyl-5,6,7,8-tetrahydrofolate.

The protein belongs to the TRAFAC class TrmE-Era-EngA-EngB-Septin-like GTPase superfamily. TrmE GTPase family. As to quaternary structure, homodimer. Heterotetramer of two MnmE and two MnmG subunits. The cofactor is K(+).

It is found in the cytoplasm. Its function is as follows. Exhibits a very high intrinsic GTPase hydrolysis rate. Involved in the addition of a carboxymethylaminomethyl (cmnm) group at the wobble position (U34) of certain tRNAs, forming tRNA-cmnm(5)s(2)U34. The sequence is that of tRNA modification GTPase MnmE from Salmonella gallinarum (strain 287/91 / NCTC 13346).